Here is a 131-residue protein sequence, read N- to C-terminus: Profilin-1 (131 aa).

This sequence belongs to the profilin family. In terms of assembly, occurs in many kinds of cells as a complex with monomeric actin in a 1:1 ratio. As to expression, expressed at low levels roots, leaves, stems, flowers and siliques. Expressed in leaf epidermal cells, trichomes and stem epidermal cells. Detected in phloem exudates (at protein level).

Its subcellular location is the cytoplasm. The protein localises to the cytoskeleton. Functionally, binds to actin monomers and regulates the organization of the actin cytoskeleton. At high concentrations, profilin prevents the polymerization of actin, whereas it enhances it at low concentrations. At low concentrations, associates with the poly-proline motif of formins to enhance actin filament elongation rate. Binds ACT1, ACT7 and ACT11 and inhibits actin polymerization. Coordinates the stochastic dynamic properties of actin filaments by modulating formin-mediated actin nucleation and assembly during axial cell expansion. Binds G-actin and poly-L-proline in vitro. Inhibits cell growth of various pathogenic fungal strains. May play a role as antifungal proteins in the defense system against fungal pathogen attacks. The protein is Profilin-1 of Arabidopsis thaliana (Mouse-ear cress).